The following is a 418-amino-acid chain: Hydroxysteroid dehydrogenase-like protein 2 (418 aa).

NADP(+) is bound by residues 17-23 (GASRGIG), Lys42, and Asp74. Lys42 carries the post-translational modification N6-(2-hydroxyisobutyryl)lysine. An N6-acetyllysine modification is found at Lys116. Tyr168 functions as the Proton acceptor in the catalytic mechanism. Lys172 serves as a coordination point for NADP(+). Residues 287–310 (STGAVPEFKEEKPQPQPKPRSGAV) are disordered. In terms of domain architecture, SCP2 spans 306–415 (RSGAVEETFR…KLEKLMNQMN (110 aa)). The residue at position 318 (Lys318) is an N6-succinyllysine.

The protein belongs to the short-chain dehydrogenases/reductases (SDR) family.

It localises to the peroxisome. It is found in the mitochondrion. Its function is as follows. Has apparently no steroid dehydrogenase activity. Controls bile acid (BA) and lipid metabolism in response to nutritional cues. This chain is Hydroxysteroid dehydrogenase-like protein 2 (HSDL2), found in Pongo abelii (Sumatran orangutan).